A 512-amino-acid polypeptide reads, in one-letter code: Pentatricopeptide repeat-containing protein At1g64583, mitochondrial (512 aa).

The N-terminal 34 residues, 1–34 (MRRLIVTGIATSTAKGFRRVVNPNLLGGGAAARA), are a transit peptide targeting the mitochondrion. 12 PPR repeats span residues 70–104 (SIVD…GISH), 105–139 (DLYS…GYEP), 140–174 (SIVT…GYEP), 175–209 (NVVV…GLGA), 210–244 (DVVT…SINP), 245–279 (DVVT…SVDP), 280–314 (NNVT…GCFP), 315–349 (NVVT…GFNA), 350–384 (DIFT…RVTP), 385–415 (DIIT…MRES), 420–454 (GIVA…GVKP), and 455–489 (DART…GIIC).

Belongs to the PPR family. P subfamily.

It localises to the mitochondrion. This Arabidopsis thaliana (Mouse-ear cress) protein is Pentatricopeptide repeat-containing protein At1g64583, mitochondrial.